The following is a 492-amino-acid chain: 3,6-anhydro-alpha-L-galactose dehydrogenase (492 aa).

NADP(+)-binding positions include 160-161 (WN), 184-187 (KPSE), and 237-238 (GS). Glu-259 (proton acceptor) is an active-site residue. Residue Leu-260 participates in NADP(+) binding. Residue Cys-293 is the Nucleophile of the active site. Glu-394 contacts NADP(+).

This sequence belongs to the aldehyde dehydrogenase family.

The catalysed reaction is 3,6-anhydro-alpha-L-galactopyranose + NADP(+) + H2O = 3,6-anhydro-L-galactonate + NADPH + 2 H(+). Significantly inhibited by EDTA. Activity is enhanced by Fe(2+), but is strongly inhibited by Mn(2+), Cu(2+), Zn(2+), Ni(2+) and Co(2+). Functionally, involved in the degradation of 3,6-anhydro-L-galactose, which is the major monomeric sugar of red macroalgae. Catalyzes the oxidation of 3,6-anhydro-L-galactose (AHG) to form 3,6-anhydrogalactonate (AHGA). Shows broad substrate specificity, with maximum activity toward AHG. The enzyme activities toward D-fructose, D-galactose and D-ribose are between 40% and 50% of the maximum, but those toward L-rhamnose, L-glyceraldehyde, D-glyceraldehyde, L-fucose and D-glucose are much lower. The chain is 3,6-anhydro-alpha-L-galactose dehydrogenase from Streptomyces coelicolor (strain ATCC BAA-471 / A3(2) / M145).